Consider the following 269-residue polypeptide: Phosphate import ATP-binding protein PstB 1 (269 aa).

Residues 23–264 (LSTEDLNVYY…PKIKAAEDYV (242 aa)) form the ABC transporter domain. 55–62 (GASGSGKS) provides a ligand contact to ATP.

It belongs to the ABC transporter superfamily. Phosphate importer (TC 3.A.1.7) family. The complex is composed of two ATP-binding proteins (PstB), two transmembrane proteins (PstC and PstA) and a solute-binding protein (PstS).

It is found in the cell membrane. It catalyses the reaction phosphate(out) + ATP + H2O = ADP + 2 phosphate(in) + H(+). Functionally, part of the ABC transporter complex PstSACB involved in phosphate import. Responsible for energy coupling to the transport system. This is Phosphate import ATP-binding protein PstB 1 from Latilactobacillus sakei subsp. sakei (strain 23K) (Lactobacillus sakei subsp. sakei).